The primary structure comprises 382 residues: D-galactonate dehydratase (382 aa).

Asp183 contacts Mg(2+). His185 functions as the Proton donor in the catalytic mechanism. Residues Glu209 and Glu235 each coordinate Mg(2+). The active-site Proton acceptor is His285.

This sequence belongs to the mandelate racemase/muconate lactonizing enzyme family. GalD subfamily. It depends on Mg(2+) as a cofactor.

The enzyme catalyses D-galactonate = 2-dehydro-3-deoxy-D-galactonate + H2O. It participates in carbohydrate acid metabolism; D-galactonate degradation; D-glyceraldehyde 3-phosphate and pyruvate from D-galactonate: step 1/3. Its function is as follows. Catalyzes the dehydration of D-galactonate to 2-keto-3-deoxy-D-galactonate. This chain is D-galactonate dehydratase, found in Escherichia coli (strain 55989 / EAEC).